The following is a 787-amino-acid chain: ISWI one complex protein 3 (787 aa).

Over residues 1–22 (MDSPSNSIQNLQQEAQGSSSAQ) the composition is skewed to polar residues. Disordered regions lie at residues 1-137 (MDSP…AHEQ), 672-693 (ILEQ…LPKD), and 749-787 (TEYD…RQRT). Residues 40-50 (DQSVSVSQSSD) show a composition bias toward low complexity. The span at 79–92 (KPKRKRPAPPKKKA) shows a compositional bias: basic residues. Basic and acidic residues predominate over residues 100 to 137 (SNDKVEKKKTTSIAKDGKPTLKTNDKKVAPKPKPAHEQ). A compositionally biased stretch (polar residues) spans 675–689 (QKSTTDNNPSINTNP). The segment covering 751–777 (YDSEEYVDDEEDDEADIYDDNDNDSSF) has biased composition (acidic residues). The segment covering 778–787 (DDGRVKRQRT) has biased composition (basic and acidic residues).

As to quaternary structure, component of the ISW1A complex, which at least consists of ISW1 and IOC3.

Its subcellular location is the nucleus. In terms of biological role, functions as a component of the ISW1A complex, which acts in remodeling the chromatin by catalyzing an ATP-dependent alteration in the structure of nucleosomal DNA. The ISW1A complex represses gene expression at initiation through specific positioning of a promoter proximal dinucleosome. This is ISWI one complex protein 3 (IOC3) from Saccharomyces cerevisiae (strain ATCC 204508 / S288c) (Baker's yeast).